The following is a 429-amino-acid chain: Adenylosuccinate synthetase (429 aa).

GTP is bound by residues 12 to 18 (GDEGKGK) and 40 to 42 (GHT). Asp-13 acts as the Proton acceptor in catalysis. Residues Asp-13 and Gly-40 each coordinate Mg(2+). IMP-binding positions include 13–16 (DEGK), 38–41 (NAGH), Thr-128, Arg-142, Gln-223, Thr-238, and Arg-302. Catalysis depends on His-41, which acts as the Proton donor. Residue 298–304 (VNTGRKR) coordinates substrate. Residues Arg-304, 330 to 332 (KLD), and 412 to 414 (GVG) contribute to the GTP site.

It belongs to the adenylosuccinate synthetase family. As to quaternary structure, homodimer. Mg(2+) serves as cofactor.

The protein localises to the cytoplasm. The enzyme catalyses IMP + L-aspartate + GTP = N(6)-(1,2-dicarboxyethyl)-AMP + GDP + phosphate + 2 H(+). The protein operates within purine metabolism; AMP biosynthesis via de novo pathway; AMP from IMP: step 1/2. In terms of biological role, plays an important role in the de novo pathway of purine nucleotide biosynthesis. Catalyzes the first committed step in the biosynthesis of AMP from IMP. The sequence is that of Adenylosuccinate synthetase from Corynebacterium jeikeium (strain K411).